Reading from the N-terminus, the 218-residue chain is Small ribosomal subunit protein uS3c (218 aa).

Residues 47–118 form the KH type-2 domain; the sequence is VQKNMRTSSG…KLNIAVTRIA (72 aa).

This sequence belongs to the universal ribosomal protein uS3 family. Part of the 30S ribosomal subunit.

The protein resides in the plastid. The protein localises to the chloroplast. This Nicotiana sylvestris (Wood tobacco) protein is Small ribosomal subunit protein uS3c (rps3).